The chain runs to 513 residues: MQLSTSEISELIKSRLENFSTSAEARTQGTVISVTDGIVRIHGLSNVMAGEMIEFPGNVYGLALNLERDSVGAVILGDYENISEGDTVKCTGRILEVPVGPELVGRVVNALGQPIDGKGPINAKLTDKIEKVAPGVIARKSVSQPVQTGIKAIDSMVPVGRGQRELIIGDRQTGKTAVAVDAIINQKGQNMTCIYVAIGQKASTIANVVRKLEEHGAMEYTIVVAASASDPAALQFLAPYAGCTMGEYFRDRGQDALIVYDDLTKQAWAYRQISLLLRRPPGREAYPGDVFYIHSRLLERAARVNEEYVEKFTNGEVKGKTGSLTALPIIETAAGDVSAFVPTNVISITDGQIFLETDLFNAGIRPAINAGISVSRVGGAAQTKVIKKLGGGVRLALAQYRELAAFAQFASDLDEVTRKQLDRGRLVTELMKQAQYAPLSTSEMAVTLLAANKGFFDDVPVARALAFESALHSFLKSKYKSILDKIDSTNDLGGDDEKALEAAIQDFKATNAY.

ATP is bound at residue 169–176 (GDRQTGKT).

Belongs to the ATPase alpha/beta chains family. F-type ATPases have 2 components, CF(1) - the catalytic core - and CF(0) - the membrane proton channel. CF(1) has five subunits: alpha(3), beta(3), gamma(1), delta(1), epsilon(1). CF(0) has three main subunits: a(1), b(2) and c(9-12). The alpha and beta chains form an alternating ring which encloses part of the gamma chain. CF(1) is attached to CF(0) by a central stalk formed by the gamma and epsilon chains, while a peripheral stalk is formed by the delta and b chains.

Its subcellular location is the cell inner membrane. The catalysed reaction is ATP + H2O + 4 H(+)(in) = ADP + phosphate + 5 H(+)(out). Produces ATP from ADP in the presence of a proton gradient across the membrane. The alpha chain is a regulatory subunit. The protein is ATP synthase subunit alpha of Methylobacillus flagellatus (strain ATCC 51484 / DSM 6875 / VKM B-1610 / KT).